We begin with the raw amino-acid sequence, 450 residues long: Glutamyl-tRNA reductase (450 aa).

Substrate contacts are provided by residues 50-53, Ser-109, 114-116, and Gln-120; these read TCNR and EPQ. Cys-51 functions as the Nucleophile in the catalytic mechanism. 189-194 contacts NADP(+); it reads GAGEMA. The interval 422–450 is disordered; sequence NEPEQPEAHKNRKRPQPDLPAGCPGKTIL.

The protein belongs to the glutamyl-tRNA reductase family. As to quaternary structure, homodimer.

The enzyme catalyses (S)-4-amino-5-oxopentanoate + tRNA(Glu) + NADP(+) = L-glutamyl-tRNA(Glu) + NADPH + H(+). Its pathway is porphyrin-containing compound metabolism; protoporphyrin-IX biosynthesis; 5-aminolevulinate from L-glutamyl-tRNA(Glu): step 1/2. Catalyzes the NADPH-dependent reduction of glutamyl-tRNA(Glu) to glutamate 1-semialdehyde (GSA). This Oleidesulfovibrio alaskensis (strain ATCC BAA-1058 / DSM 17464 / G20) (Desulfovibrio alaskensis) protein is Glutamyl-tRNA reductase.